The sequence spans 390 residues: Protein NDRG4-A (390 aa).

The tract at residues 356–390 (LTSASSVDGSRPRPCTQSESSDGIGQINHTMEVSC) is disordered. The segment covering 370-390 (CTQSESSDGIGQINHTMEVSC) has biased composition (polar residues).

It belongs to the NDRG family.

It localises to the cytoplasm. The protein resides in the cytosol. Its function is as follows. Contributes to the maintenance of intracerebral BDNF levels within the normal range. May enhance growth factor-induced ERK1 and ERK2 phosphorylation. May attenuate growth factor-promoted ELK1 phosphorylation in a microtubule-dependent manner. The chain is Protein NDRG4-A (ndrg4-a) from Xenopus laevis (African clawed frog).